We begin with the raw amino-acid sequence, 192 residues long: Ion-translocating oxidoreductase complex subunit B (192 aa).

The interval 1-26 is hydrophobic; it reads MNAIWIAVAAVSLLGLAFGAILGYAS. The region spanning 32-91 is the 4Fe-4S domain; the sequence is EDDPVVEKIDEILPQSQCGQCGYPGCRPYAETISCNGEKINRCAPGGEAVMLKIAELLNV. The [4Fe-4S] cluster site is built by C49, C52, C57, C74, C117, C120, C123, C127, C147, C150, C153, and C157. 4Fe-4S ferredoxin-type domains are found at residues 108-137 and 138-167; these read MVAV…GATR and AMHT…LQPV.

Belongs to the 4Fe4S bacterial-type ferredoxin family. RnfB subfamily. As to quaternary structure, the complex is composed of six subunits: RsxA, RsxB, RsxC, RsxD, RsxE and RsxG. It depends on [4Fe-4S] cluster as a cofactor.

The protein resides in the cell inner membrane. In terms of biological role, part of a membrane-bound complex that couples electron transfer with translocation of ions across the membrane. Required to maintain the reduced state of SoxR. The polypeptide is Ion-translocating oxidoreductase complex subunit B (Escherichia coli O6:K15:H31 (strain 536 / UPEC)).